The following is a 416-amino-acid chain: Serine hydroxymethyltransferase (416 aa).

Residues Leu121 and 125 to 127 (GHL) contribute to the (6S)-5,6,7,8-tetrahydrofolate site. The residue at position 229 (Lys229) is an N6-(pyridoxal phosphate)lysine.

It belongs to the SHMT family. Homodimer. Pyridoxal 5'-phosphate is required as a cofactor.

The protein resides in the cytoplasm. It carries out the reaction (6R)-5,10-methylene-5,6,7,8-tetrahydrofolate + glycine + H2O = (6S)-5,6,7,8-tetrahydrofolate + L-serine. Its pathway is one-carbon metabolism; tetrahydrofolate interconversion. It participates in amino-acid biosynthesis; glycine biosynthesis; glycine from L-serine: step 1/1. Functionally, catalyzes the reversible interconversion of serine and glycine with tetrahydrofolate (THF) serving as the one-carbon carrier. This reaction serves as the major source of one-carbon groups required for the biosynthesis of purines, thymidylate, methionine, and other important biomolecules. Also exhibits THF-independent aldolase activity toward beta-hydroxyamino acids, producing glycine and aldehydes, via a retro-aldol mechanism. The protein is Serine hydroxymethyltransferase of Neisseria gonorrhoeae (strain ATCC 700825 / FA 1090).